A 631-amino-acid polypeptide reads, in one-letter code: 1-deoxy-D-xylulose-5-phosphate synthase (631 aa).

Residues His-73, 113-115 (SHA), Asn-174, Tyr-285, and Glu-367 contribute to the thiamine diphosphate site. Mg(2+) is bound at residue Asn-174.

The protein belongs to the transketolase family. DXPS subfamily. As to quaternary structure, homodimer. Requires Mg(2+) as cofactor. The cofactor is thiamine diphosphate.

It carries out the reaction D-glyceraldehyde 3-phosphate + pyruvate + H(+) = 1-deoxy-D-xylulose 5-phosphate + CO2. Its pathway is metabolic intermediate biosynthesis; 1-deoxy-D-xylulose 5-phosphate biosynthesis; 1-deoxy-D-xylulose 5-phosphate from D-glyceraldehyde 3-phosphate and pyruvate: step 1/1. In terms of biological role, catalyzes the acyloin condensation reaction between C atoms 2 and 3 of pyruvate and glyceraldehyde 3-phosphate to yield 1-deoxy-D-xylulose-5-phosphate (DXP). The chain is 1-deoxy-D-xylulose-5-phosphate synthase from Streptomyces sp. (strain CL190).